We begin with the raw amino-acid sequence, 112 residues long: Large ribosomal subunit protein uL22 (112 aa).

It belongs to the universal ribosomal protein uL22 family. In terms of assembly, part of the 50S ribosomal subunit.

Its function is as follows. This protein binds specifically to 23S rRNA; its binding is stimulated by other ribosomal proteins, e.g. L4, L17, and L20. It is important during the early stages of 50S assembly. It makes multiple contacts with different domains of the 23S rRNA in the assembled 50S subunit and ribosome. The globular domain of the protein is located near the polypeptide exit tunnel on the outside of the subunit, while an extended beta-hairpin is found that lines the wall of the exit tunnel in the center of the 70S ribosome. The chain is Large ribosomal subunit protein uL22 from Desulfovibrio desulfuricans (strain ATCC 27774 / DSM 6949 / MB).